Here is a 719-residue protein sequence, read N- to C-terminus: Glutamate--tRNA ligase, cytoplasmic (719 aa).

Residue serine 93 coordinates ATP. The interval 176 to 205 (SGKPVAAPKSKDSQQAVKGDGQDKGKPEVD) is disordered. Residues 195–204 (DGQDKGKPEV) are compositionally biased toward basic and acidic residues. Residue 217–219 (RFA) coordinates L-glutamate. The 'HIGH' region signature appears at 220-230 (PEPSGYLHIGH). Position 227 (histidine 227) interacts with ATP. Residues 393 to 397 (YDFAC) and arginine 411 contribute to the L-glutamate site. ATP is bound by residues glutamate 414 and 448–452 (LLSKR). A 'KMSKS' region motif is present at residues 448 to 452 (LLSKR).

It belongs to the class-I aminoacyl-tRNA synthetase family. Glutamate--tRNA ligase type 2 subfamily. In terms of assembly, interacts with GLN2, COL4 and RPP13L4/ZAR1.

It is found in the cytoplasm. The protein localises to the cytosol. The catalysed reaction is tRNA(Glu) + L-glutamate + ATP = L-glutamyl-tRNA(Glu) + AMP + diphosphate. Its function is as follows. Catalyzes the attachment of glutamate to tRNA(Glu) in a two-step reaction: glutamate is first activated by ATP to form Glu-AMP and then transferred to the acceptor end of tRNA(Glu). The sequence is that of Glutamate--tRNA ligase, cytoplasmic from Arabidopsis thaliana (Mouse-ear cress).